We begin with the raw amino-acid sequence, 534 residues long: Serine protease vicPb (534 aa).

Positions methionine 1–glycine 17 are cleaved as a signal peptide. Asparagine 34, asparagine 65, and asparagine 126 each carry an N-linked (GlcNAc...) asparagine glycan. Serine 174 (charge relay system) is an active-site residue. N-linked (GlcNAc...) asparagine glycans are attached at residues asparagine 297, asparagine 335, asparagine 352, asparagine 415, and asparagine 437. Aspartate 451 (charge relay system) is an active-site residue.

Belongs to the peptidase S28 family.

It functions in the pathway mycotoxin biosynthesis. In terms of biological role, serine protease, part of the gene cluster that mediates the biosynthesis of the secondary metabolite victorin, the molecular basis for Victoria blight of oats. Within the pathway, vicPa and vicPb are probably involved in the processing of the vicA1 and vicA2 precursors. The pathway starts with the processing of the precursor vicA1 by several endopeptidases including kexin proteases as well as the cluster-specific S28 family peptidases vicPa and vicPb to produce 7 identical copies of the hexapeptide Gly-Leu-Lys-Leu-Ala-Phe. After being excised from the precursor peptide, the core peptides are cyclized and modified post-translationally by enzymes encoded within the gene cluster. The ustYa family oxidase vicYb is required for the formation of the macrocycle in victorin and the copper amine oxidases (CAOs) vicK1 and vicK2 are responsible for converting victorin to the active form by oxidizing the N-terminal glycyl residue in the peptides to glyoxylate. Relaxed substrate specificity of enzymes in the victorin biosynthetic pathway results in a metabolic grid that produces a set of analogs including victorinines B, C, E or HV-toxin M. The chain is Serine protease vicPb from Bipolaris victoriae (strain FI3) (Victoria blight of oats agent).